Consider the following 432-residue polypeptide: MLFEQGQQALELPECTMQKAAYYENPGLFGGYGYSKTTDTYGYSTPHQPYPPPAAASSLDTDYPGSACSIQSSAPLRAPAHKGAELNGSCMRPGTGNSQGGGGGSQPPGLNSEQQPPQPPPPPPTLPPSSPTNPGGGVPAKKPKGGPNASSSSATISKQIFPWMKESRQNSKQKNSCATAGESCEDKSPPGPASKRVRTAYTSAQLVELEKEFHFNRYLCRPRRVEMANLLNLTERQIKIWFQNRRMKYKKDQKAKGILHSPASQSPERSPPLGGAAGHVAYSGQLPPVPGLAYDAPSPPAFAKSQPNMYGLAAYTAPLSSCLPQQKRYAAPEFEPHPMASNGGGFASANLQGSPVYVGGNFVESMAPASGPVFNLGHLSHPSSASVDYSCAAQIPGNHHHGPCDPHPTYTDLSAHHSSQGRLPEAPKLTHL.

Disordered regions lie at residues 43 to 62, 68 to 197, 253 to 280, and 400 to 432; these read YSTP…LDTD, CSIQ…SKRV, QKAK…AGHV, and HHGP…LTHL. Residues 97 to 106 show a composition bias toward gly residues; the sequence is NSQGGGGGSQ. Residues 116 to 131 show a composition bias toward pro residues; sequence PPQPPPPPPTLPPSSP. Polar residues predominate over residues 148-158; the sequence is NASSSSATISK. The Antp-type hexapeptide signature appears at 160–165; that stretch reads IFPWMK. The homeobox DNA-binding region spans 194–253; that stretch reads SKRVRTAYTSAQLVELEKEFHFNRYLCRPRRVEMANLLNLTERQIKIWFQNRRMKYKKDQ.

It belongs to the Antp homeobox family.

The protein localises to the nucleus. Its function is as follows. Sequence-specific transcription factor which is part of a developmental regulatory system that provides cells with specific positional identities on the anterior-posterior axis. This chain is Homeobox protein Hox-D3 (HOXD3), found in Homo sapiens (Human).